The primary structure comprises 102 residues: Small ribosomal subunit protein uS10 (102 aa).

It belongs to the universal ribosomal protein uS10 family. Part of the 30S ribosomal subunit.

Functionally, involved in the binding of tRNA to the ribosomes. This is Small ribosomal subunit protein uS10 from Heliobacterium modesticaldum (strain ATCC 51547 / Ice1).